A 657-amino-acid chain; its full sequence is Kinesin-like protein KIF22 (657 aa).

Residues 1 to 33 (MNVRAKKKPQQREMASASSGPSRSLSKGGVSRR) form a disordered region. Low complexity predominate over residues 16 to 33 (SASSGPSRSLSKGGVSRR). The 323-residue stretch at 38 to 360 (RVRVAVRLRP…LNFTARSKEV (323 aa)) folds into the Kinesin motor domain. Residue 119 to 126 (GPTGAGKT) coordinates ATP. Residues 388–415 (PSEAKKAKGPEEESTGSPESTAAPASAS) are disordered. The segment covering 402 to 415 (TGSPESTAAPASAS) has biased composition (low complexity). A phosphoserine mark is found at Ser-404, Ser-419, and Ser-444. Lys-457 is covalently cross-linked (Glycyl lysine isopeptide (Lys-Gly) (interchain with G-Cter in SUMO2)). Positions 457–502 (KRERMVLIKTVEEKNLEIERLKMKQKELEAKVLAQEALDPKEKENT) form a coiled coil. Residues Ser-537, Ser-554, and Ser-573 each carry the phosphoserine modification.

This sequence belongs to the TRAFAC class myosin-kinesin ATPase superfamily. Kinesin family. As to quaternary structure, interacts with FAM83D and SIAH1. Post-translationally, ubiquitinated; mediated by SIAH1 and leading to its subsequent proteasomal degradation.

The protein resides in the nucleus. Its subcellular location is the cytoplasm. The protein localises to the cytoskeleton. Functionally, kinesin family member that is involved in spindle formation and the movements of chromosomes during mitosis and meiosis. Binds to microtubules and to DNA. Plays a role in congression of laterally attached chromosomes in NDC80-depleted cells. The polypeptide is Kinesin-like protein KIF22 (Kif22) (Rattus norvegicus (Rat)).